The sequence spans 220 residues: Small ribosomal subunit protein uS3 (220 aa).

The KH type-2 domain occupies 39–107; that stretch reads IREHVEGRLK…RVHINISEIK (69 aa).

It belongs to the universal ribosomal protein uS3 family. Part of the 30S ribosomal subunit. Forms a tight complex with proteins S10 and S14.

Binds the lower part of the 30S subunit head. Binds mRNA in the 70S ribosome, positioning it for translation. This is Small ribosomal subunit protein uS3 from Shouchella clausii (strain KSM-K16) (Alkalihalobacillus clausii).